Consider the following 886-residue polypeptide: uncharacterized protein (886 aa).

The N-terminal stretch at 1-20 (MKILKSLVLLVLFIVMPAKA) is a signal peptide. The next 6 helical transmembrane spans lie at 520 to 540 (VIIFGLMFVAGTLKLTAIEVI), 563 to 583 (TYFFSVFTDGIDFFITNVVGA), 609 to 629 (LLFIELLQIHNGLAFIAIITI), 647 to 667 (IIAFIGVTVMISLAPFFIILM), 680 to 700 (ISTLLSYVVQPTILLIFFLLI), and 771 to 791 (FLVLFTTALLFYVYCLMSYGL).

The protein belongs to the TrbL/VirB6 family.

Its subcellular location is the cell membrane. This is an uncharacterized protein from Rickettsia typhi (strain ATCC VR-144 / Wilmington).